The following is a 1029-amino-acid chain: Translation initiation factor IF-2 (1029 aa).

The tract at residues 73–441 is disordered; it reads RELRSEEDDG…RQRRRERKRE (369 aa). Acidic residues-rich tracts occupy residues 106 to 121 and 148 to 177; these read TAEEAAEPAVADDEEE and AEAEPSGDEASAEASADDAPADEAPTDEAE. Over residues 183 to 196 the composition is skewed to basic and acidic residues; the sequence is AADKDAAAIADEQK. Acidic residues-rich tracts occupy residues 213–234, 242–258, and 279–322; these read TGEETSDTDAATEADATDDAEA, TEAEPETPADETEAEDV, and APDE…DEEG. Over residues 358-372 the composition is skewed to basic and acidic residues; sequence KDKDKDKSSKKDKKD. Residues 373 to 386 are compositionally biased toward basic residues; that stretch reads KSNKKSKSKGKKQK. The segment covering 400-411 has biased composition (low complexity); the sequence is QTLQETLQELEQ. The segment covering 417–427 has biased composition (basic residues); the sequence is RQRRRRRRRKR. Over residues 428–441 the composition is skewed to basic and acidic residues; the sequence is HEEERQRRRERKRE. In terms of domain architecture, tr-type G spans 524-696; the sequence is PRAPVVTVMG…LLQSEIMELK (173 aa). A G1 region spans residues 533–540; it reads GHVDHGKT. 533 to 540 contributes to the GTP binding site; it reads GHVDHGKT. Residues 558 to 562 are G2; it reads GITQH. Residues 582-585 are G3; that stretch reads DTPG. Residues 582–586 and 636–639 each bind GTP; these read DTPGH and NKMD. Positions 636–639 are G4; it reads NKMD. Residues 672–674 form a G5 region; that stretch reads SAK.

This sequence belongs to the TRAFAC class translation factor GTPase superfamily. Classic translation factor GTPase family. IF-2 subfamily.

The protein resides in the cytoplasm. One of the essential components for the initiation of protein synthesis. Protects formylmethionyl-tRNA from spontaneous hydrolysis and promotes its binding to the 30S ribosomal subunits. Also involved in the hydrolysis of GTP during the formation of the 70S ribosomal complex. This Salinibacter ruber (strain DSM 13855 / M31) protein is Translation initiation factor IF-2.